The sequence spans 358 residues: Phenylalanine--tRNA ligase alpha subunit (358 aa).

Glu-258 is a Mg(2+) binding site.

This sequence belongs to the class-II aminoacyl-tRNA synthetase family. Phe-tRNA synthetase alpha subunit type 1 subfamily. Tetramer of two alpha and two beta subunits. Mg(2+) is required as a cofactor.

Its subcellular location is the cytoplasm. The catalysed reaction is tRNA(Phe) + L-phenylalanine + ATP = L-phenylalanyl-tRNA(Phe) + AMP + diphosphate + H(+). In Rhodospirillum rubrum (strain ATCC 11170 / ATH 1.1.1 / DSM 467 / LMG 4362 / NCIMB 8255 / S1), this protein is Phenylalanine--tRNA ligase alpha subunit.